Here is a 2844-residue protein sequence, read N- to C-terminus: Sodium channel protein 60E (2844 aa).

Residues 1–121 lie on the Cytoplasmic side of the membrane; sequence MSDDQATFND…WSPARRVCVY (121 aa). One copy of the I repeat lies at 107–434; the sequence is FLFYPWSPAR…FDPSVLNVKK (328 aa). The chain crosses the membrane as a helical span at residues 122-145; it reads IATNQFFDYCVMATILFNCIFLAM. Topologically, residues 146–151 are extracellular; that stretch reads TETVEE. The helical transmembrane segment at 152–172 threads the bilayer; that stretch reads AEYIFLAIYSIEMVIKIIAKG. Over 173-183 the chain is Cytoplasmic; the sequence is FLLNKYTYLRN. A helical transmembrane segment spans residues 184–202; sequence PWNWLDFVVITSGYATIGM. The Extracellular segment spans residues 203-208; it reads EVGNLA. Residues 209–228 traverse the membrane as a helical; Voltage-sensor segment; that stretch reads GLRTFRVLRALKTVSIMPGL. Over 229-244 the chain is Cytoplasmic; that stretch reads KTIINALLHSFRQLAE. The helical transmembrane segment at 245–265 threads the bilayer; the sequence is VMTLTIFCLMVFALFALQVYM. The Extracellular segment spans residues 266–340; sequence GELRNKCVRQ…PNHGYTNFDN (75 aa). Residues cysteine 272 and cysteine 318 are joined by a disulfide bond. N-linked (GlcNAc...) asparagine glycosylation is found at asparagine 282, asparagine 293, and asparagine 311. The segment at residues 341 to 365 is an intramembrane region (pore-forming); sequence FMWSMLTTFQLITLDYWENVYNMVL. Residues 366 to 374 lie on the Extracellular side of the membrane; sequence ATCGPMSVS. Residues 375–395 traverse the membrane as a helical segment; it reads FFTVVVFFGSFYLINLMLAVV. Topologically, residues 396–687 are cytoplasmic; that stretch reads ALSYEEEAEI…QNCLYKVVRD (292 aa). Residues 452–610 form a disordered region; it reads ASYSKKKTRR…QDTTNDMGHV (159 aa). The span at 455–465 shows a compositional bias: basic residues; the sequence is SKKKTRRKKTK. Residues 469–479 are compositionally biased toward gly residues; sequence EGGTNGNGNGS. Low complexity-rich tracts occupy residues 511–520 and 577–586; these read QAQKQYQQME and SSNSSGVNRE. Positions 593–603 are enriched in acidic residues; sequence GVVDDHEEQDT. One copy of the II repeat lies at 668–1130; that stretch reads CTDYESWLQF…ESIELLGQYN (463 aa). Residues 688–708 form a helical membrane-spanning segment; it reads PLFELAITLCIVLNTAFLAME. Topologically, residues 709-718 are extracellular; the sequence is HHGMSESFRN. The chain crosses the membrane as a helical span at residues 719–743; it reads ALDVGNKVFTSIFTFECIVKLMALS. The Cytoplasmic segment spans residues 744–749; sequence KDFFLC. Residues 750–769 form a helical membrane-spanning segment; the sequence is GWNIFDLLIVTASLLDIIFE. Residues 770–775 are Extracellular-facing; that stretch reads LVDGLS. A helical; Voltage-sensor transmembrane segment spans residues 776–795; that stretch reads VLRGLRLLRVLKLAQSWTTM. At 796–810 the chain is on the cytoplasmic side; the sequence is KVLLSIIISTIGALG. Residues 811-832 form a helical membrane-spanning segment; that stretch reads NLTLILVIVIYIFAVIGMQLFS. The Extracellular portion of the chain corresponds to 833-852; that stretch reads KDYTPEKFDPDPVPRWNFND. Residues 853-873 constitute an intramembrane region (pore-forming); sequence FFHSFMMIFRILCGEWIEPLW. At 874–889 the chain is on the extracellular side; it reads DCMRAEEEQGASTCFA. The cysteines at positions 875 and 887 are disulfide-linked. Residues 890–910 form a helical membrane-spanning segment; it reads IFLPTLVMGNFMVLNLFLALL. The Cytoplasmic portion of the chain corresponds to 911 to 1742; sequence LNSFNSEELK…SAKHWTRVRT (832 aa). Over residues 1129–1157 the composition is skewed to polar residues; sequence YNSTDTDPYANDQRSGCGSFNRGDSLQDN. 5 disordered regions span residues 1129 to 1166, 1185 to 1224, 1268 to 1288, 1577 to 1630, and 1635 to 1654; these read YNST…GSEE, YRKS…NSMS, ISNV…ENET, APTP…ADAS, and LAMA…ATQK. The segment covering 1191–1203 has biased composition (low complexity); it reads RLSQSSGQSQRSL. Basic and acidic residues predominate over residues 1204–1213; the sequence is LKSEEAEMRR. 3 stretches are compositionally biased toward polar residues: residues 1277 to 1286, 1604 to 1618, and 1640 to 1654; these read PSSQMGQPEN, PQST…QSAR, and KTEQ…ATQK. The stretch at 1723-2040 is one III repeat; that stretch reads PWFMSCMDTQ…QKHYYTAMKK (318 aa). The chain crosses the membrane as a helical span at residues 1743–1763; that stretch reads AVLTVVDTPAFEWFVLVLIFA. The Extracellular portion of the chain corresponds to 1764–1789; it reads SSITLCFEDINLDKNKTLKRVLYWIN. N-linked (GlcNAc...) asparagine glycans are attached at residues asparagine 1778 and asparagine 1789. The chain crosses the membrane as a helical span at residues 1790–1810; the sequence is FSFCLIFVVEMILKWLALGFS. The Cytoplasmic segment spans residues 1811-1813; sequence KYF. The helical transmembrane segment at 1814 to 1834 threads the bilayer; sequence TSFWTILDFIIVFVSVFSLLI. Over 1835 to 1839 the chain is Extracellular; the sequence is EENEN. A helical; Voltage-sensor transmembrane segment spans residues 1840–1861; the sequence is LKVLRSLRTLRALRPLRAISRW. The Cytoplasmic segment spans residues 1862 to 1880; it reads QGMRIVVNALMYAIPSIFN. A helical membrane pass occupies residues 1881 to 1902; that stretch reads VLLVCLVFWLIFSIMGVQFFGG. The Extracellular segment spans residues 1903 to 1943; sequence KFFKCVNEMGELLPITEVNDKWDCIEQNYTWINSKITFDHV. N-linked (GlcNAc...) asparagine glycosylation is present at asparagine 1930. Residues 1944 to 1965 constitute an intramembrane region (pore-forming); the sequence is GMGYLALLQVATFEGWMEVMAD. Residues 1966–1981 are Extracellular-facing; it reads AVDARGVDLQPQREAN. Residues 1982 to 2002 form a helical membrane-spanning segment; sequence LYAYIYFVIFIVCGSFFTLNL. Topologically, residues 2003–2069 are cytoplasmic; sequence FIGVIIDNFN…MFYDLSNSRR (67 aa). Residues 2050-2311 form an IV repeat; sequence IKRPINHFLA…NMYIAIILEN (262 aa). The chain crosses the membrane as a helical span at residues 2070-2090; that stretch reads FEIAIFVLIFLNMLTMGIEHY. At 2091–2095 the chain is on the extracellular side; the sequence is DQPHA. Residues 2096–2116 traverse the membrane as a helical segment; the sequence is VFFILEVSNAFFTTVFGLEAI. The Cytoplasmic portion of the chain corresponds to 2117 to 2132; the sequence is VKIVGLRYHYFTVPWN. A helical transmembrane segment spans residues 2133–2153; that stretch reads VFDFLLVLASIFGILMEDIMI. Over 2154–2162 the chain is Extracellular; it reads DLPISPTLL. Residues 2163 to 2184 form a helical; Voltage-sensor membrane-spanning segment; that stretch reads RVVRVFRIGRILRLIKAAKGIR. Residues 2185-2199 lie on the Cytoplasmic side of the membrane; sequence KLLFALVVSLPALFN. Residues 2200-2220 traverse the membrane as a helical segment; that stretch reads IGALLGLITFIYAILGMSLFG. Over 2221-2236 the chain is Extracellular; the sequence is NVKLQGALDDMVNFQT. Residues 2237–2259 constitute an intramembrane region (pore-forming); it reads FGRSMQLLFRLMTSAGWNDVLES. Residues 2260–2288 lie on the Extracellular side of the membrane; the sequence is LMIQPPDCDPFIHGHTNGNCGHPLLAITY. Residues 2289–2309 traverse the membrane as a helical segment; the sequence is FTSFIIISYMIVINMYIAIIL. At 2310-2844 the chain is on the cytoplasmic side; it reads ENFNQAHQEE…QFESLPDRQR (535 aa). The region spanning 2441–2470 is the IQ domain; the sequence is QEKAAKTIQTGWKEYLRRKREKERSNSGDS. 4 disordered regions span residues 2457-2479, 2584-2668, 2780-2802, and 2818-2844; these read RRKR…SPGG, SLTS…LSAQ, DSPK…GAPI, and NPEK…DRQR. Polar residues predominate over residues 2467 to 2479; it reads SGDSATQTSSPGG. The span at 2595 to 2632 shows a compositional bias: low complexity; the sequence is AMNNTTNTTSNSASTSGTASSTATAPATGCGPAATSAS. Positions 2647 to 2658 are enriched in basic residues; the sequence is SRKRASSFIRKK. Over residues 2825–2836 the composition is skewed to polar residues; the sequence is DQGNGQDETAQF.

It belongs to the sodium channel (TC 1.A.1.10) family. NaCP60E subfamily. As to expression, in embryonic and larval stages, expression is limited to very few non-neuronal cells in either the CNS or PNS. In pupal and adult stages, expressed in cell bodies of the fly central nervous system, including optic lobes, central brain, subesophageal ganglion, thoracico-abdominal ganglion, major olfactory organs, the third antennal segment and the maxillary palps.

The protein localises to the cell membrane. Mediates the voltage-dependent sodium ion permeability of excitable membranes. Plays a role in processing of olfactory information during the olfactory avoidance response. The protein is Sodium channel protein 60E (NaCP60E) of Drosophila melanogaster (Fruit fly).